The primary structure comprises 456 residues: Dothistromin biosynthesis regulatory protein aflJ (456 aa).

Positions Leu74 to Gly143 constitute an HTH iclR-type domain. The segment at residues Tyr104–Arg123 is a DNA-binding region (H-T-H motif). Residues Lys290 to Glu300 show a composition bias toward polar residues. The interval Lys290 to Glu314 is disordered.

The protein localises to the nucleus. Functionally, transcription coactivator involved in regulation of the dothistromin biosynthesis gene cluster with aflR. This chain is Dothistromin biosynthesis regulatory protein aflJ, found in Dothistroma septosporum (strain NZE10 / CBS 128990) (Red band needle blight fungus).